Here is a 740-residue protein sequence, read N- to C-terminus: Polyribonucleotide nucleotidyltransferase (740 aa).

Mg(2+)-binding residues include Asp-514 and Asp-520. In terms of domain architecture, KH spans 580–639 (PRIITVKIPVDKIGEVIGPKRQMINQIQEDTGAEITIEDDGTIYIGAADGPAAEAARATI). The S1 motif domain maps to 651 to 723 (GERILGSVVK…SRGKLSLIPV (73 aa)).

The protein belongs to the polyribonucleotide nucleotidyltransferase family. In terms of assembly, homotrimer. Mg(2+) is required as a cofactor.

It is found in the cytoplasm. It catalyses the reaction RNA(n+1) + phosphate = RNA(n) + a ribonucleoside 5'-diphosphate. Functionally, involved in mRNA degradation. Catalyzes the phosphorolysis of single-stranded polyribonucleotides processively in the 3'- to 5'-direction. The protein is Polyribonucleotide nucleotidyltransferase of Streptomyces antibioticus.